The sequence spans 131 residues: Single-stranded DNA-binding protein 1 (131 aa).

The 103-residue stretch at 1–103 folds into the SSB domain; sequence MYNKVIAIGR…VLCQSFQLLE (103 aa).

In terms of assembly, homotetramer.

This chain is Single-stranded DNA-binding protein 1 (ssb1), found in Streptococcus pyogenes serotype M6 (strain ATCC BAA-946 / MGAS10394).